We begin with the raw amino-acid sequence, 146 residues long: Extracellular globin-2A (146 aa).

Residues 4-146 (HCGPLQRLKV…EVIYPGIKHD (143 aa)) enclose the Globin domain. Cys-5 and Cys-134 form a disulfide bridge. His-97 contacts heme b.

This sequence belongs to the globin family. As to quaternary structure, disulfide bonded trimer of chains IIA, IIB, and IIC.

This Tylorrhynchus heterochetus (Japanese palolo worm) protein is Extracellular globin-2A.